A 375-amino-acid chain; its full sequence is Alcohol dehydrogenase 1 (375 aa).

N-acetylserine is present on Ser-2. Positions 47, 68, 98, 101, 104, 112, and 175 each coordinate Zn(2+). NAD(+) contacts are provided by residues 200–205 (WSGRVG), Asp-224, and Lys-229. Lys-234 is subject to N6-succinyllysine. 293–295 (VGV) is a binding site for NAD(+). Lys-340 carries the N6-succinyllysine modification. Arg-370 serves as a coordination point for NAD(+).

Belongs to the zinc-containing alcohol dehydrogenase family. Class-I subfamily. As to quaternary structure, homodimer. Requires Zn(2+) as cofactor.

It is found in the cytoplasm. It carries out the reaction a primary alcohol + NAD(+) = an aldehyde + NADH + H(+). The catalysed reaction is a secondary alcohol + NAD(+) = a ketone + NADH + H(+). In Geomys knoxjonesi (Jones' pocket gopher), this protein is Alcohol dehydrogenase 1 (ADH1).